We begin with the raw amino-acid sequence, 380 residues long: MLRRKPSNASEKEPTQKKKLSLQRSSSFKDFAKSKPSSPVVSEKEFNLDDNIPEDDSGVPTPEDAGKSGKKLGKKWRAVISRTMNRKMGKMMVKALSEEMADTLEEGSASPTSPDYSLDSPGPEKMALAFSEQEEHELPVLSRQASTGSELCSPSPGSGSFGEEPPAPQYTGPFCGRARVHTDFTPSPYDHDSLKLQKGDVIQIIEKPPVGTWLGLLNGKVGSFKFIYVDVLPEEAVGHARPSRRQSKGKRPKPKTLHELLERIGLEEHTSTLLLNGYQTLEDFKELRETHLNELNIMDPQHRAKLLTAAELLLDYDTGSEEAEEGAESSQEPVAHTVSEPKVDIPRDSGCFEGSESGRDDAELAGTEEQLQGLSLAGAP.

The tract at residues 1–76 is disordered; sequence MLRRKPSNAS…KSGKKLGKKW (76 aa). The span at 22–41 shows a compositional bias: low complexity; it reads LQRSSSFKDFAKSKPSSPVV. Residues serine 27, serine 34, and serine 42 each carry the phosphoserine modification. Phosphothreonine is present on threonine 61. The residue at position 97 (serine 97) is a Phosphoserine. Disordered stretches follow at residues 98 to 174, 237 to 256, and 318 to 380; these read EEMA…TGPF, VGHARPSRRQSKGKRPKPKT, and TGSE…AGAP. Residue threonine 103 is modified to Phosphothreonine. A Phosphoserine modification is found at serine 110. Threonine 112 carries the post-translational modification Phosphothreonine. Phosphoserine is present on serine 113. Tyrosine 116 carries the phosphotyrosine modification. Serine 120 is subject to Phosphoserine. A compositionally biased stretch (polar residues) spans 143–152; that stretch reads RQASTGSELC. Residues 153–164 are compositionally biased toward low complexity; the sequence is SPSPGSGSFGEE. The 62-residue stretch at 173–234 folds into the SH3 domain; sequence PFCGRARVHT…KFIYVDVLPE (62 aa). Residues 241-255 are compositionally biased toward basic residues; it reads RPSRRQSKGKRPKPK. Positions 252 to 316 constitute an SAM domain; the sequence is PKPKTLHELL…LTAAELLLDY (65 aa). Threonine 318 carries the phosphothreonine modification. Acidic residues predominate over residues 318–327; sequence TGSEEAEEGA. Serine 320 bears the Phosphoserine mark.

Its function is as follows. May function as a signaling adapter protein in lymphocytes. The protein is SAM and SH3 domain-containing protein 3 (SASH3) of Homo sapiens (Human).